A 628-amino-acid chain; its full sequence is (+)-alpha-pinene synthase, chloroplastic (628 aa).

Residues 1 to 48 (MALVSAVPLNSKLCLRRTLFGFSHELKAIHSTVPNLGMCRGGKSIAPS) constitute a chloroplast transit peptide. Mg(2+)-binding residues include Asp379, Asp383, and Asp531. Residues 379-383 (DDIYD) carry the DDXXD motif motif. K(+) is bound at residue Ser539.

The protein belongs to the terpene synthase family. Tpsd subfamily. Mg(2+) is required as a cofactor. Requires Mn(2+) as cofactor. K(+) serves as cofactor.

The protein resides in the plastid. It is found in the chloroplast. It catalyses the reaction (2E)-geranyl diphosphate = (1R,5R)-alpha-pinene + diphosphate. The protein operates within terpene metabolism; oleoresin biosynthesis. Involved in defensive oleoresin formation in conifers in response to insect attack or other injury. Involved in monoterpene (C10) olefins biosynthesis. Produces mainly (+)-alpha-pinene (97%) with a small amount of (-)-alpha-pinene (3%). The chain is (+)-alpha-pinene synthase, chloroplastic (PT30) from Pinus taeda (Loblolly pine).